A 107-amino-acid chain; its full sequence is Nucleoid-associated protein amb4104 (107 aa).

This sequence belongs to the YbaB/EbfC family. As to quaternary structure, homodimer.

It localises to the cytoplasm. The protein localises to the nucleoid. Binds to DNA and alters its conformation. May be involved in regulation of gene expression, nucleoid organization and DNA protection. The sequence is that of Nucleoid-associated protein amb4104 from Paramagnetospirillum magneticum (strain ATCC 700264 / AMB-1) (Magnetospirillum magneticum).